A 673-amino-acid chain; its full sequence is FLYWCH-type zinc finger-containing protein 1 (673 aa).

A disordered region spans residues 1-62 (MPLPEPSEQD…SSTATLPNNT (62 aa)). Position 21 is a phosphoserine (Ser-21). The span at 47-62 (VASQETSSTATLPNNT) shows a compositional bias: polar residues. 2 FLYWCH-type zinc fingers span residues 92 to 150 (FLKT…DHCH) and 235 to 293 (FLKT…SHCH). Lys-110 participates in a covalent cross-link: Glycyl lysine isopeptide (Lys-Gly) (interchain with G-Cter in SUMO2). Positions 147–158 (DHCHPPEKEGLD) are enriched in basic and acidic residues. Residues 147-178 (DHCHPPEKEGLDRKKRHRGRPPSSALPEGAEV) are disordered. Phosphoserine is present on residues Ser-294 and Ser-339. Positions 351–402 (LSRSKSKSKSKSRSKSKSKSRSRSRKRAKKQQESSQEPPEEDQDVDPRGPEF) are disordered. Positions 354 to 379 (SKSKSKSKSRSKSKSKSRSRSRKRAK) are enriched in basic residues. 3 consecutive FLYWCH-type zinc fingers follow at residues 402-460 (FLKT…SHCH), 490-548 (FLKT…RHCH), and 581-639 (FLRT…SHCH). Residues 646–673 (LEALRQREKAPSAAKKKKKKKKKKKGIH) are disordered. Basic residues predominate over residues 659-673 (AKKKKKKKKKKKGIH). A Glycyl lysine isopeptide (Lys-Gly) (interchain with G-Cter in SUMO2) cross-link involves residue Lys-666.

Interacts with CTNNB1 (when unphosphorylated), perhaps preventing interaction of CTNNB1 with TCF4, and thereby regulating transcription activation; phosphorylation of CTNNB1 may inhibit the interaction.

The protein resides in the nucleus. Its subcellular location is the chromosome. The protein localises to the centromere. Functionally, transcription cofactor. Negatively regulates transcription activation by catenin beta-1 CTNNB1, perhaps acting by competing with TCF4 for CTNNB1 binding. May play a role in DNA-damage response signaling. Binds specifically to DNA sequences at peri-centromeric chromatin loci. This Mus musculus (Mouse) protein is FLYWCH-type zinc finger-containing protein 1 (Flywch1).